Here is a 752-residue protein sequence, read N- to C-terminus: Granule-bound starch synthase 2, chloroplastic/amyloplastic (752 aa).

The transit peptide at 1 to 57 directs the protein to the chloroplast; the sequence is MMLSLGSDATVLPFHAKNLKFTPKLSTLNGDLAFSKGLGVGRLNCGSVRLNHKQHVR. Disordered regions lie at residues 116–146 and 224–253; these read LEGNGVSYESSEKSLSRDSNPQKGSSSSGSA and FENFEGANEPSSKEVANEAENFESGGEKPP. ADP-alpha-D-glucose is bound at residue lysine 275.

It belongs to the glycosyltransferase 1 family. Bacterial/plant glycogen synthase subfamily. In terms of tissue distribution, widely expressed.

The protein resides in the plastid. It localises to the chloroplast. The protein localises to the amyloplast. It catalyses the reaction [(1-&gt;4)-alpha-D-glucosyl](n) + ADP-alpha-D-glucose = [(1-&gt;4)-alpha-D-glucosyl](n+1) + ADP + H(+). It functions in the pathway glycan biosynthesis; starch biosynthesis. The protein is Granule-bound starch synthase 2, chloroplastic/amyloplastic of Pisum sativum (Garden pea).